Reading from the N-terminus, the 468-residue chain is Phosphomethylpyrimidine synthase (468 aa).

Substrate contacts are provided by residues asparagine 82, methionine 111, tyrosine 141, histidine 177, 197 to 199 (SRG), 238 to 241 (DSLR), and glutamate 277. A Zn(2+)-binding site is contributed by histidine 281. Tyrosine 304 contacts substrate. Histidine 345 provides a ligand contact to Zn(2+). Cysteine 425, cysteine 428, and cysteine 433 together coordinate [4Fe-4S] cluster.

This sequence belongs to the ThiC family. The cofactor is [4Fe-4S] cluster.

The enzyme catalyses 5-amino-1-(5-phospho-beta-D-ribosyl)imidazole + S-adenosyl-L-methionine = 4-amino-2-methyl-5-(phosphooxymethyl)pyrimidine + CO + 5'-deoxyadenosine + formate + L-methionine + 3 H(+). It functions in the pathway cofactor biosynthesis; thiamine diphosphate biosynthesis. Its function is as follows. Catalyzes the synthesis of the hydroxymethylpyrimidine phosphate (HMP-P) moiety of thiamine from aminoimidazole ribotide (AIR) in a radical S-adenosyl-L-methionine (SAM)-dependent reaction. The sequence is that of Phosphomethylpyrimidine synthase from Prochlorococcus marinus (strain SARG / CCMP1375 / SS120).